Reading from the N-terminus, the 417-residue chain is Phosphoglycerate kinase 2 (417 aa).

(2R)-3-phosphoglycerate contacts are provided by Val-23, Asp-24, Phe-25, Asn-26, Asn-38, Arg-39, Ser-62, His-63, Gly-65, Arg-66, Leu-121, Arg-122, His-168, and Arg-169. Gly-212 is an ADP binding site. Position 212 (Gly-212) interacts with CDP. Residues Ala-213 and Lys-214 each contribute to the AMP site. Ala-213 is a binding site for ATP. Ala-213 is a Mg(2+) binding site. Asp-217 serves as a coordination point for CDP. Position 217 (Asp-217) interacts with Mg(2+). An AMP-binding site is contributed by Lys-218. An ATP-binding site is contributed by Lys-218. Gly-236 serves as a coordination point for ADP. CDP is bound at residue Gly-236. AMP-binding residues include Gly-237 and Gly-312. ATP-binding residues include Gly-237 and Gly-312. The CDP site is built by Gly-337 and Phe-342. Phe-342 contributes to the ADP binding site. Glu-343 serves as a coordination point for AMP. Residues Glu-343, Asp-374, and Thr-375 each coordinate ATP. Asp-374 is a binding site for Mg(2+).

The protein belongs to the phosphoglycerate kinase family. Monomer. The cofactor is Mg(2+).

Its subcellular location is the cytoplasm. It localises to the mitochondrion. The catalysed reaction is (2R)-3-phosphoglycerate + ATP = (2R)-3-phospho-glyceroyl phosphate + ADP. It functions in the pathway carbohydrate degradation; glycolysis; pyruvate from D-glyceraldehyde 3-phosphate: step 2/5. Functionally, catalyzes one of the two ATP producing reactions in the glycolytic pathway via the reversible conversion of 1,3-diphosphoglycerate to 3-phosphoglycerate. Both L- and D- forms of purine and pyrimidine nucleotides can be used as substrates, but the activity is much lower on pyrimidines. Negatively regulates the biosynthesis of acetyl-CoA from pyruvate in the mitochondrion. The sequence is that of Phosphoglycerate kinase 2 (PGK2) from Rhizopus niveus.